The sequence spans 179 residues: NADH-quinone oxidoreductase subunit I (179 aa).

2 4Fe-4S ferredoxin-type domains span residues 45 to 74 and 90 to 119; these read RHPD…VEAA and KVYE…LGNE. Residues Cys54, Cys57, Cys60, Cys64, Cys99, Cys102, Cys105, and Cys109 each coordinate [4Fe-4S] cluster. Residues 146–179 are disordered; that stretch reads PQRREAQRTGKPVRLGFKVPKGPRPELEGVEYPR. Over residues 168 to 179 the composition is skewed to basic and acidic residues; the sequence is PRPELEGVEYPR.

Belongs to the complex I 23 kDa subunit family. NDH-1 is composed of 15 different subunits. Subunits NuoA, H, J, K, L, M, N constitute the membrane sector of the complex. The cofactor is [4Fe-4S] cluster.

It is found in the cell membrane. The enzyme catalyses a quinone + NADH + 5 H(+)(in) = a quinol + NAD(+) + 4 H(+)(out). In terms of biological role, NDH-1 shuttles electrons from NADH, via FMN and iron-sulfur (Fe-S) centers, to quinones in the respiratory chain. The immediate electron acceptor for the enzyme in this species is believed to be ubiquinone. Couples the redox reaction to proton translocation (for every two electrons transferred, four hydrogen ions are translocated across the cytoplasmic membrane), and thus conserves the redox energy in a proton gradient. The sequence is that of NADH-quinone oxidoreductase subunit I from Deinococcus geothermalis (strain DSM 11300 / CIP 105573 / AG-3a).